The following is a 253-amino-acid chain: MATAKTIDLTGKAVGEVELPAVFDADYRPDLIKKAVLAAQANRLQPYGPRLYSGMETSARGWGSGRGVSHVPRLVNSSRAARVPHAKGGRRAHPPKPEADRSEKVNTKERRYAIRSAIAATTDPTLVSLRGHIFEAELPIVAVNDLESLERTKQVIEFLEAAGLYEDVLRAKYGRHIRAGRGKLRGRKYKHKKSVLIVAGENTPILKAARNLSGVDVVTVDSLNAELLAPGTHAGRLTVWTESAIGKLEGAFQ.

The tract at residues 78 to 107 is disordered; sequence SRAARVPHAKGGRRAHPPKPEADRSEKVNT. Positions 82-94 are enriched in basic residues; it reads RVPHAKGGRRAHP. A compositionally biased stretch (basic and acidic residues) spans 95-107; that stretch reads PKPEADRSEKVNT.

Belongs to the universal ribosomal protein uL4 family. As to quaternary structure, part of the 50S ribosomal subunit.

One of the primary rRNA binding proteins, this protein initially binds near the 5'-end of the 23S rRNA. It is important during the early stages of 50S assembly. It makes multiple contacts with different domains of the 23S rRNA in the assembled 50S subunit and ribosome. Functionally, forms part of the polypeptide exit tunnel. This chain is Large ribosomal subunit protein uL4, found in Methanosarcina acetivorans (strain ATCC 35395 / DSM 2834 / JCM 12185 / C2A).